The primary structure comprises 229 residues: Orotidine 5'-phosphate decarboxylase (229 aa).

Residues Asp-10, Lys-32, 59–68, Thr-119, Arg-180, Gln-189, Gly-209, and Arg-210 each bind substrate; that span reads DLKFHDIPNT. Lys-61 functions as the Proton donor in the catalytic mechanism.

This sequence belongs to the OMP decarboxylase family. Type 1 subfamily. As to quaternary structure, homodimer.

It catalyses the reaction orotidine 5'-phosphate + H(+) = UMP + CO2. Its pathway is pyrimidine metabolism; UMP biosynthesis via de novo pathway; UMP from orotate: step 2/2. Catalyzes the decarboxylation of orotidine 5'-monophosphate (OMP) to uridine 5'-monophosphate (UMP). The polypeptide is Orotidine 5'-phosphate decarboxylase (Legionella pneumophila (strain Paris)).